A 240-amino-acid polypeptide reads, in one-letter code: Lipoprotein-releasing system ATP-binding protein LolD (240 aa).

The ABC transporter domain maps to 15 to 240 (IRAERLGKTY…GLRELTSAEV (226 aa)). 51–58 (GASGAGKS) is an ATP binding site.

It belongs to the ABC transporter superfamily. Lipoprotein translocase (TC 3.A.1.125) family. In terms of assembly, the complex is composed of two ATP-binding proteins (LolD) and two transmembrane proteins (LolC and LolE).

It is found in the cell inner membrane. Functionally, part of the ABC transporter complex LolCDE involved in the translocation of mature outer membrane-directed lipoproteins, from the inner membrane to the periplasmic chaperone, LolA. Responsible for the formation of the LolA-lipoprotein complex in an ATP-dependent manner. This is Lipoprotein-releasing system ATP-binding protein LolD from Xylella fastidiosa (strain 9a5c).